Consider the following 606-residue polypeptide: Mitogen-activated protein kinase kinase kinase 7 (606 aa).

An interaction with MAPK8IP1 region spans residues 1–300 (MSTASAASSS…FPGADEPLQY (300 aa)). One can recognise a Protein kinase domain in the interval 36-291 (IEVEEVVGRG…KIMTHLMRYF (256 aa)). Residues 42–50 (VGRGAFGVV) and Lys63 each bind ATP. A Glycyl lysine isopeptide (Lys-Gly) (interchain with G-Cter in ubiquitin) cross-link involves residue Lys72. Catalysis depends on Asp156, which acts as the Proton acceptor. Residue Lys158 forms a Glycyl lysine isopeptide (Lys-Gly) (interchain with G-Cter in ubiquitin) linkage. Phosphothreonine; by autocatalysis occurs at positions 184 and 187. Ser192 is subject to Phosphoserine; by autocatalysis. Lys209 is covalently cross-linked (Glycyl lysine isopeptide (Lys-Gly) (interchain with G-Cter in ubiquitin)). 2 disordered regions span residues 301–338 (PCQY…MEQV) and 354–391 (KNQA…MSAD). Residues 306 to 338 (DEGQSNSATSTGSFMDIASTNTSNKSDTNMEQV) are compositionally biased toward polar residues. The span at 361–375 (SDSGRLSLGASRGSS) shows a compositional bias: low complexity. A phosphoserine mark is found at Ser367, Ser389, and Ser439. Positions 443–452 (LTVTGTEPGQ) are enriched in polar residues. Positions 443-492 (LTVTGTEPGQVSSRSSSPSVRMITTSGPTSEKPARSLPWTPDDSTDTNGS) are disordered. Residues 453-463 (VSSRSSSPSVR) are compositionally biased toward low complexity. The residue at position 455 (Ser455) is a Phosphoserine.

Belongs to the protein kinase superfamily. STE Ser/Thr protein kinase family. MAP kinase kinase kinase subfamily. Can form homodimer. Binds both upstream activators and downstream substrates in multimolecular complexes. Interacts with TAB1/MAP3K7IP1, TAB2/MAP3K7IP2 and TAB3/MAP3K7IP3. Identified in the TRIKA2 complex composed of MAP3K7/TAK1, TAB1/MAP3K7IP1 and TAB2/MAP3K7IP2. Interacts with PPM1L and PPM1B/PP2CB. Interaction with PP2A and PPP6C leads to its repressed activity. Interacts with TRAF6 and TAB1/MAP3K7IP1; during IL-1 signaling. Interacts with TAOK1 and TAOK2; interaction with TAOK2 interferes with MAP3K7 interaction with IKKA, thus preventing NF-kappa-B activation. Interacts with DYNC2I2 (via WD domains). Interacts with CYLD and RBCK1. Interacts with TGFBR1; induces MAP3K7/TAK1 activation by TRAF6. Interacts with MAPK8IP1 and SMAD6. Interacts with isoform 1 of VRK2. Interacts with DAB2; the interaction is induced by TGF-beta stimulation and may mediate TGF-beta stimulated JNK activation. Interacts with TRIM5. Part of a complex containing ITCH, NDFIP1 and MAP3K7. Interacts with PLEKHM1 (via N- and C-terminus). Found in a complex with SH3RF1, RAC2, MAP2K7/MKK7, MAPK8IP1/JIP1, MAPK8/JNK1 and MAPK9/JNK2. Interacts with SASH1. Interacts with RIPK1. The cofactor is Mg(2+). Association with TAB1/MAP3K7IP1 promotes autophosphorylation at Ser-192 and subsequent activation. Association with TAB2/MAP3K7IP2, itself associated with free unanchored Lys-63 polyubiquitin chain, promotes autophosphorylation and subsequent activation of MAP3K7. Dephosphorylation at Ser-192 by PPM1B/PP2CB and at Thr-187 by PP2A and PPP6C leads to inactivation. Deubiquitinated by USP19; leading to negative regulation of TNF-alpha- and IL-1beta-triggered NF-kappa-B activation. In terms of processing, 'Lys-48'-linked polyubiquitination at Lys-72 is induced by TNFalpha, and leads to proteasomal degradation. Undergoes 'Lys-48'-linked polyubiquitination catalyzed by ITCH. 'Lys-63'-linked polyubiquitination at Lys-158 by TRIM8 does not lead to proteasomal degradation but contributes to autophosphorylation and activation. Deubiquitinated by CYLD, a protease that selectively cleaves 'Lys-63'-linked ubiquitin chains.

It is found in the cytoplasm. Its subcellular location is the cell membrane. The enzyme catalyses L-seryl-[protein] + ATP = O-phospho-L-seryl-[protein] + ADP + H(+). It catalyses the reaction L-threonyl-[protein] + ATP = O-phospho-L-threonyl-[protein] + ADP + H(+). Activated by pro-inflammatory cytokines and in response to physical and chemical stresses, including osmotic stress, oxidative stress, arsenic and ultraviolet light irradiation. Activated by 'Lys-63'-linked polyubiquitination and by autophosphorylation. Association with TAB1/MAP3K7IP1 and TAB2/MAP3K7IP2 promotes activation through autophosphorylation, whereas PPM1B/PP2CB, PP2A and PPP6C dephosphorylation leads to inactivation. Ceramides are also able to activate MAP3K7/TAK1. Serine/threonine kinase which acts as an essential component of the MAP kinase signal transduction pathway. Plays an important role in the cascades of cellular responses evoked by changes in the environment. Mediates signal transduction of TRAF6, various cytokines including interleukin-1 (IL-1), transforming growth factor-beta (TGFB), TGFB-related factors like BMP2 and BMP4, toll-like receptors (TLR), tumor necrosis factor receptor CD40 and B-cell receptor (BCR). Once activated, acts as an upstream activator of the MKK/JNK signal transduction cascade and the p38 MAPK signal transduction cascade through the phosphorylation and activation of several MAP kinase kinases like MAP2K1/MEK1, MAP2K3/MKK3, MAP2K6/MKK6 and MAP2K7/MKK7. These MAP2Ks in turn activate p38 MAPKs and c-jun N-terminal kinases (JNKs); both p38 MAPK and JNK pathways control the transcription factors activator protein-1 (AP-1). Independently of MAP2Ks and p38 MAPKs, acts as a key activator of NF-kappa-B by promoting activation of the I-kappa-B-kinase (IKK) core complex. Mechanistically, recruited to polyubiquitin chains of RIPK2 and IKBKG/NEMO via TAB2/MAP3K7IP2 and TAB3/MAP3K7IP3, and catalyzes phosphorylation and activation of IKBKB/IKKB component of the IKK complex, leading to NF-kappa-B activation. In osmotic stress signaling, plays a major role in the activation of MAPK8/JNK1, but not that of NF-kappa-B. Promotes TRIM5 capsid-specific restriction activity. Phosphorylates RIPK1 at 'Ser-321' which positively regulates RIPK1 interaction with RIPK3 to promote necroptosis but negatively regulates RIPK1 kinase activity and its interaction with FADD to mediate apoptosis. Phosphorylates STING1 in response to cGAMP-activation, promoting association between STEEP1 and STING1 and STING1 translocation to COPII vesicles. This is Mitogen-activated protein kinase kinase kinase 7 (Map3k7) from Rattus norvegicus (Rat).